The sequence spans 224 residues: Urease accessory protein UreF (224 aa).

It belongs to the UreF family. UreD, UreF and UreG form a complex that acts as a GTP-hydrolysis-dependent molecular chaperone, activating the urease apoprotein by helping to assemble the nickel containing metallocenter of UreC. The UreE protein probably delivers the nickel.

It is found in the cytoplasm. Functionally, required for maturation of urease via the functional incorporation of the urease nickel metallocenter. The chain is Urease accessory protein UreF from Pseudomonas fluorescens (strain Pf0-1).